Here is a 535-residue protein sequence, read N- to C-terminus: CTP synthase (535 aa).

The amidoligase domain stretch occupies residues 1–267 (MTKYIFVTGG…DQIVCDHLKL (267 aa)). Ser-13 provides a ligand contact to CTP. Residue Ser-13 coordinates UTP. 14–19 (SLGKGI) contributes to the ATP binding site. Tyr-54 lines the L-glutamine pocket. An ATP-binding site is contributed by Asp-71. 2 residues coordinate Mg(2+): Asp-71 and Glu-141. CTP contacts are provided by residues 148–150 (DIE), 188–193 (KTKPTQ), and Lys-224. UTP-binding positions include 188–193 (KTKPTQ) and Lys-224. 240 to 242 (RDA) is an ATP binding site. The 243-residue stretch at 292 to 534 (KIALVGKYVE…VRASITNKES (243 aa)) folds into the Glutamine amidotransferase type-1 domain. Gly-354 contacts L-glutamine. Cys-381 acts as the Nucleophile; for glutamine hydrolysis in catalysis. L-glutamine contacts are provided by residues 382-385 (LGMQ), Glu-405, and Arg-462. Catalysis depends on residues His-507 and Glu-509.

The protein belongs to the CTP synthase family. As to quaternary structure, homotetramer.

It catalyses the reaction UTP + L-glutamine + ATP + H2O = CTP + L-glutamate + ADP + phosphate + 2 H(+). The catalysed reaction is L-glutamine + H2O = L-glutamate + NH4(+). It carries out the reaction UTP + NH4(+) + ATP = CTP + ADP + phosphate + 2 H(+). It functions in the pathway pyrimidine metabolism; CTP biosynthesis via de novo pathway; CTP from UDP: step 2/2. Its activity is regulated as follows. Allosterically activated by GTP, when glutamine is the substrate; GTP has no effect on the reaction when ammonia is the substrate. The allosteric effector GTP functions by stabilizing the protein conformation that binds the tetrahedral intermediate(s) formed during glutamine hydrolysis. Inhibited by the product CTP, via allosteric rather than competitive inhibition. Functionally, catalyzes the ATP-dependent amination of UTP to CTP with either L-glutamine or ammonia as the source of nitrogen. Regulates intracellular CTP levels through interactions with the four ribonucleotide triphosphates. In Bacillus cereus (strain ATCC 10987 / NRS 248), this protein is CTP synthase.